The following is a 315-amino-acid chain: Melanocyte-stimulating hormone receptor (315 aa).

The Extracellular segment spans residues 1-35; sequence MSTQEPQKSLLGSLNSNATSHLGLATNQSEPWCLY. N-linked (GlcNAc...) asparagine glycans are attached at residues Asn17 and Asn27. A helical membrane pass occupies residues 36-61; sequence VSIPDGLFLSLGLVSLVENVLVVIAI. Over 62 to 70 the chain is Cytoplasmic; sequence TKNRNLHSP. The helical transmembrane segment at 71–91 threads the bilayer; sequence MYYFICCLALSDLMVSVSIVL. At 92–116 the chain is on the extracellular side; that stretch reads ETTIILLLEAGILVARVALVQQLDN. Residues 117-138 traverse the membrane as a helical segment; the sequence is LIDVLICGSMVSSLCFLGIIAI. Residues 139 to 161 are Cytoplasmic-facing; the sequence is DRYISIFYALRYHSIVTLPRARR. A helical membrane pass occupies residues 162 to 181; that stretch reads AVVGIWMVSIVSSTLFITYY. The Extracellular portion of the chain corresponds to 182 to 189; the sequence is KHTAVLLC. A helical membrane pass occupies residues 190 to 209; that stretch reads LVTFFLAMLALMAILYAHMF. The Cytoplasmic portion of the chain corresponds to 210 to 238; the sequence is TRACQHAQGIAQLHKRRRSIRQGFCLKGA. A helical membrane pass occupies residues 239–264; the sequence is ATLTILLGIFFLCWGPFFLHLLLIVL. Residues 265–277 lie on the Extracellular side of the membrane; it reads CPQHPTCSCIFKN. Residues 278–298 form a helical membrane-spanning segment; sequence FNLFLLLIVLSSTVDPLIYAF. The Cytoplasmic segment spans residues 299 to 315; that stretch reads RSQELRMTLKEVLLCSW. Residue Cys313 is the site of S-palmitoyl cysteine attachment.

The protein belongs to the G-protein coupled receptor 1 family. Interacts with MGRN1, but does not undergo MGRN1-mediated ubiquitination; this interaction competes with GNAS-binding and thus inhibits agonist-induced cAMP production. Interacts with OPN3; the interaction results in a decrease in MC1R-mediated cAMP signaling and ultimately a decrease in melanin production in melanocytes.

It is found in the cell membrane. Functionally, receptor for MSH (alpha, beta and gamma) and ACTH. The activity of this receptor is mediated by G proteins which activate adenylate cyclase. Mediates melanogenesis, the production of eumelanin (black/brown) and phaeomelanin (red/yellow), via regulation of cAMP signaling in melanocytes. This is Melanocyte-stimulating hormone receptor (Mc1r) from Mus musculus (Mouse).